The chain runs to 331 residues: GTP 3',8-cyclase (331 aa).

In terms of domain architecture, Radical SAM core spans 6–234; that stretch reads PFNRKIDYLR…PATGKSHDGP (229 aa). Arginine 15 serves as a coordination point for GTP. [4Fe-4S] cluster is bound by residues cysteine 22 and cysteine 26. S-adenosyl-L-methionine is bound at residue tyrosine 28. A [4Fe-4S] cluster-binding site is contributed by cysteine 29. Arginine 66 provides a ligand contact to GTP. Position 70 (glycine 70) interacts with S-adenosyl-L-methionine. GTP is bound at residue serine 97. An S-adenosyl-L-methionine-binding site is contributed by serine 121. Position 158 (lysine 158) interacts with GTP. An S-adenosyl-L-methionine-binding site is contributed by methionine 192. [4Fe-4S] cluster-binding residues include cysteine 258 and cysteine 261. Residue 263–265 participates in GTP binding; that stretch reads RVR. Cysteine 275 contacts [4Fe-4S] cluster.

Belongs to the radical SAM superfamily. MoaA family. As to quaternary structure, monomer and homodimer. The cofactor is [4Fe-4S] cluster.

It carries out the reaction GTP + AH2 + S-adenosyl-L-methionine = (8S)-3',8-cyclo-7,8-dihydroguanosine 5'-triphosphate + 5'-deoxyadenosine + L-methionine + A + H(+). Its pathway is cofactor biosynthesis; molybdopterin biosynthesis. Catalyzes the cyclization of GTP to (8S)-3',8-cyclo-7,8-dihydroguanosine 5'-triphosphate. In Hydrogenovibrio crunogenus (strain DSM 25203 / XCL-2) (Thiomicrospira crunogena), this protein is GTP 3',8-cyclase.